An 89-amino-acid chain; its full sequence is Small ribosomal subunit protein uS14A (89 aa).

This sequence belongs to the universal ribosomal protein uS14 family. In terms of assembly, part of the 30S ribosomal subunit. Contacts proteins S3 and S10.

Functionally, binds 16S rRNA, required for the assembly of 30S particles and may also be responsible for determining the conformation of the 16S rRNA at the A site. This is Small ribosomal subunit protein uS14A from Staphylococcus epidermidis (strain ATCC 35984 / DSM 28319 / BCRC 17069 / CCUG 31568 / BM 3577 / RP62A).